We begin with the raw amino-acid sequence, 940 residues long: UvrABC system protein A (940 aa).

Residue 31–38 (GLSGSGKS) participates in ATP binding. The C4-type zinc-finger motif lies at 252-279 (CPQCGYSMQELEPRLFSFNNPAGACGTC). 2 ABC transporter domains span residues 309–586 (WDQK…PNSL) and 606–936 (RDPK…RFLK). 639–646 (GVSGSGKS) contributes to the ATP binding site. The segment at 739 to 765 (CEACQGDGVIKVEMHFLPDVYVPCDVC) adopts a C4-type zinc-finger fold.

This sequence belongs to the ABC transporter superfamily. UvrA family. In terms of assembly, forms a heterotetramer with UvrB during the search for lesions.

Its subcellular location is the cytoplasm. The UvrABC repair system catalyzes the recognition and processing of DNA lesions. UvrA is an ATPase and a DNA-binding protein. A damage recognition complex composed of 2 UvrA and 2 UvrB subunits scans DNA for abnormalities. When the presence of a lesion has been verified by UvrB, the UvrA molecules dissociate. The polypeptide is UvrABC system protein A (Vibrio parahaemolyticus serotype O3:K6 (strain RIMD 2210633)).